Consider the following 414-residue polypeptide: Multifunctional CCA protein (414 aa).

Positions 8 and 11 each coordinate ATP. CTP is bound by residues G8 and R11. Mg(2+) is bound by residues D21 and D23. ATP contacts are provided by R91, R137, and R140. CTP is bound by residues R91, R137, and R140. The 102-residue stretch at 226–327 (TGVHVMMVVD…VTLFERCDAF (102 aa)) folds into the HD domain.

The protein belongs to the tRNA nucleotidyltransferase/poly(A) polymerase family. Bacterial CCA-adding enzyme type 1 subfamily. Monomer. Can also form homodimers and oligomers. The cofactor is Mg(2+). It depends on Ni(2+) as a cofactor.

It carries out the reaction a tRNA precursor + 2 CTP + ATP = a tRNA with a 3' CCA end + 3 diphosphate. The enzyme catalyses a tRNA with a 3' CCA end + 2 CTP + ATP = a tRNA with a 3' CCACCA end + 3 diphosphate. Its function is as follows. Catalyzes the addition and repair of the essential 3'-terminal CCA sequence in tRNAs without using a nucleic acid template. Adds these three nucleotides in the order of C, C, and A to the tRNA nucleotide-73, using CTP and ATP as substrates and producing inorganic pyrophosphate. tRNA 3'-terminal CCA addition is required both for tRNA processing and repair. Also involved in tRNA surveillance by mediating tandem CCA addition to generate a CCACCA at the 3' terminus of unstable tRNAs. While stable tRNAs receive only 3'-terminal CCA, unstable tRNAs are marked with CCACCA and rapidly degraded. The protein is Multifunctional CCA protein of Herminiimonas arsenicoxydans.